The primary structure comprises 598 residues: MFGIQENIPRGGTTMKEEPLGGGMNPVRSWMHTAGVVDANTAAQSGVGLARAHFEKQPPSNLRKSNFFHFVLAMYDRQGQPVEIERTTFVDFVEKDKEPNSEKTNNGIHYKLQLLYSNGVRTEQDLYVRLIDSMTKQAIIYEGQDKNPEMCRVLLTHEIMCSRCCDKKSCGNRNETPSDPVIIDRFFLKFFLKCNQNCLKNAGNPRDMRRFQVVVSTTVNVDGHVLAVSDNMFVHNNSKHGRRARRLDPSEGTAPSYLENVATPCIKAISPSEGWTTGGATVIIIGDNFFDGLQVVFGTMLVWSELITPHAIRVQTPPRHIPGVVEVTLSYKSKQFCKGAPGRFVYTALNEPTIDYGFQRLQKVIPRHPGDPERLPKEVLLKRAADLVEALYGMPHNNQEIILKRAADIAEALYSVPRNHNQIPSLANTPSHSGMMGVNSFSSQLAVNVSETSQANDQVGYSRNTSSVSPRGYVPSSTPQQSNYNTVSNSMNGYGNAGMPNLGVPGSPGFLNGSSANSPYGIVPSSPTMAASSVTLPSNCSSTHGIFSFSPANVISAVKQKSAFAPVVRPQASPPPSCTSANGNGLQDMYFSPTFSKS.

The disordered stretch occupies residues 1-23 (MFGIQENIPRGGTTMKEEPLGGG). Residues 63-66 (RKSN) form an interaction with DNA region. Residues 151-170 (CRVLLTHEIMCSRCCDKKSC) form a C5-type zinc finger. Interaction with DNA regions lie at residues 197 to 204 (NCLKNAGN) and 236 to 239 (NNSK). Positions 264–347 (PCIKAISPSE…KGAPGRFVYT (84 aa)) constitute an IPT/TIG domain. The interval 452–483 (TSQANDQVGYSRNTSSVSPRGYVPSSTPQQSN) is disordered.

It belongs to the COE family. Forms either a homodimer or a heterodimer with a related family member.

Its subcellular location is the nucleus. Functionally, acts as a transcriptional activator. In Xenopus laevis (African clawed frog), this protein is Transcription factor COE3 (coe3).